A 206-amino-acid polypeptide reads, in one-letter code: Probable chemoreceptor glutamine deamidase CheD 1 (206 aa).

The protein belongs to the CheD family.

It carries out the reaction L-glutaminyl-[protein] + H2O = L-glutamyl-[protein] + NH4(+). Functionally, probably deamidates glutamine residues to glutamate on methyl-accepting chemotaxis receptors (MCPs), playing an important role in chemotaxis. The chain is Probable chemoreceptor glutamine deamidase CheD 1 from Shewanella oneidensis (strain ATCC 700550 / JCM 31522 / CIP 106686 / LMG 19005 / NCIMB 14063 / MR-1).